The primary structure comprises 60 residues: Large ribosomal subunit protein bL32 (60 aa).

The span at 1–20 (MACPKKKTSKSKRSMRRAAW) shows a compositional bias: basic residues. The segment at 1-22 (MACPKKKTSKSKRSMRRAAWKR) is disordered.

It belongs to the bacterial ribosomal protein bL32 family.

In Thermosynechococcus vestitus (strain NIES-2133 / IAM M-273 / BP-1), this protein is Large ribosomal subunit protein bL32.